Here is a 198-residue protein sequence, read N- to C-terminus: Putative glutathione S-transferase alpha-2 (198 aa).

Serine 2 is subject to N-acetylserine. The 77-residue stretch at 5 to 81 (SVPSLTYFQG…YIAKKHNFMG (77 aa)) folds into the GST N-terminal domain. Glutathione-binding positions include tyrosine 11, arginine 45, 52 to 53 (QL), and 65 to 66 (QS). One can recognise a GST C-terminal domain in the interval 83-198 (NLEEEFLVDQ…YIKERPETKF (116 aa)).

The protein belongs to the GST superfamily. Alpha family.

The catalysed reaction is RX + glutathione = an S-substituted glutathione + a halide anion + H(+). Its function is as follows. Conjugation of reduced glutathione to a wide number of exogenous and endogenous hydrophobic electrophiles. The polypeptide is Putative glutathione S-transferase alpha-2 (gsta2-1) (Dictyostelium discoideum (Social amoeba)).